A 179-amino-acid chain; its full sequence is ATP-dependent protease subunit HslV (179 aa).

Residue T7 is part of the active site. 3 residues coordinate Na(+): A162, C165, and T168.

It belongs to the peptidase T1B family. HslV subfamily. As to quaternary structure, a double ring-shaped homohexamer of HslV is capped on each side by a ring-shaped HslU homohexamer. The assembly of the HslU/HslV complex is dependent on binding of ATP.

The protein localises to the cytoplasm. It catalyses the reaction ATP-dependent cleavage of peptide bonds with broad specificity.. With respect to regulation, allosterically activated by HslU binding. In terms of biological role, protease subunit of a proteasome-like degradation complex believed to be a general protein degrading machinery. The polypeptide is ATP-dependent protease subunit HslV (Nitrosococcus oceani (strain ATCC 19707 / BCRC 17464 / JCM 30415 / NCIMB 11848 / C-107)).